A 600-amino-acid chain; its full sequence is Proline--tRNA ligase (600 aa).

The protein belongs to the class-II aminoacyl-tRNA synthetase family. ProS type 1 subfamily. As to quaternary structure, homodimer.

It is found in the cytoplasm. The catalysed reaction is tRNA(Pro) + L-proline + ATP = L-prolyl-tRNA(Pro) + AMP + diphosphate. In terms of biological role, catalyzes the attachment of proline to tRNA(Pro) in a two-step reaction: proline is first activated by ATP to form Pro-AMP and then transferred to the acceptor end of tRNA(Pro). As ProRS can inadvertently accommodate and process non-cognate amino acids such as alanine and cysteine, to avoid such errors it has two additional distinct editing activities against alanine. One activity is designated as 'pretransfer' editing and involves the tRNA(Pro)-independent hydrolysis of activated Ala-AMP. The other activity is designated 'posttransfer' editing and involves deacylation of mischarged Ala-tRNA(Pro). The misacylated Cys-tRNA(Pro) is not edited by ProRS. In Prochlorococcus marinus (strain MIT 9215), this protein is Proline--tRNA ligase.